We begin with the raw amino-acid sequence, 123 residues long: Holo-[acyl-carrier-protein] synthase (123 aa).

Mg(2+) is bound by residues D9 and E57.

The protein belongs to the P-Pant transferase superfamily. AcpS family. Requires Mg(2+) as cofactor.

The protein localises to the cytoplasm. The catalysed reaction is apo-[ACP] + CoA = holo-[ACP] + adenosine 3',5'-bisphosphate + H(+). Transfers the 4'-phosphopantetheine moiety from coenzyme A to a Ser of acyl-carrier-protein. The chain is Holo-[acyl-carrier-protein] synthase from Streptomyces avermitilis (strain ATCC 31267 / DSM 46492 / JCM 5070 / NBRC 14893 / NCIMB 12804 / NRRL 8165 / MA-4680).